A 202-amino-acid polypeptide reads, in one-letter code: 7-cyano-7-deazaguanine synthase 1 (202 aa).

7–17 (MSGGLDSSSAA) is an ATP binding site. Positions 166, 174, 177, and 180 each coordinate Zn(2+).

This sequence belongs to the QueC family. Requires Zn(2+) as cofactor.

It catalyses the reaction 7-carboxy-7-deazaguanine + NH4(+) + ATP = 7-cyano-7-deazaguanine + ADP + phosphate + H2O + H(+). The protein operates within purine metabolism; 7-cyano-7-deazaguanine biosynthesis. Functionally, catalyzes the ATP-dependent conversion of 7-carboxy-7-deazaguanine (CDG) to 7-cyano-7-deazaguanine (preQ(0)). This chain is 7-cyano-7-deazaguanine synthase 1 (queC1), found in Sulfurisphaera tokodaii (strain DSM 16993 / JCM 10545 / NBRC 100140 / 7) (Sulfolobus tokodaii).